Consider the following 388-residue polypeptide: Probable nitrate transporter NarT (388 aa).

The next 12 helical transmembrane spans lie at 14 to 34 (TLSL…MPMI), 45 to 65 (ISIV…PFGY), 69 to 89 (IIGA…PIFL), 98 to 118 (MLML…VGVT), 139 to 159 (GNLG…AIGW), 161 to 181 (STVR…FFLG), 206 to 226 (YYLS…GIFL), 242 to 262 (GIRA…GGII), 276 to 296 (FLFM…ILFT), 297 to 317 (VGCL…FKLV), 330 to 350 (GIVS…ITYV), and 359 to 379 (LAFI…WHLS).

This sequence belongs to the major facilitator superfamily. Nitrate/nitrite porter (TC 2.A.1.8) family.

It localises to the cell membrane. Probably required for nitrate uptake under anoxic conditions. Also possibly involved in excretion of nitrite produced by the dissimilatory reduction of nitrate. The sequence is that of Probable nitrate transporter NarT (narT) from Staphylococcus carnosus (strain TM300).